The following is a 279-amino-acid chain: RRP15-like protein (279 aa).

Disordered stretches follow at residues 1 to 40 (MALL…GANA), 56 to 120 (GPTV…TERR), and 200 to 279 (KSTA…DEED). A compositionally biased stretch (basic and acidic residues) spans 73–83 (KTSEAAKKPGF). Composition is skewed to acidic residues over residues 93-104 (KEEDDDDEEDGD) and 213-224 (QETDDDDEDDTA). Basic and acidic residues predominate over residues 232–245 (KKSEWNVLREDFMT). Residues 267 to 279 (DEADDSDDDDEED) are compositionally biased toward acidic residues.

Belongs to the RRP15 family.

This Drosophila pseudoobscura pseudoobscura (Fruit fly) protein is RRP15-like protein.